The primary structure comprises 124 residues: MDKLFNRSFRIAQELQKNIAFIIQHSLKDPRIKTIITVSEVRLSKDLSYAQVFVSFLETNSNLTVKKVLILLNRASGYIRKLLCKKMNLRIIPIIVFFHDDSFFKGNKISKLLNILTEKNNITL.

Belongs to the RbfA family. Monomer. Binds 30S ribosomal subunits, but not 50S ribosomal subunits or 70S ribosomes.

It localises to the cytoplasm. Functionally, one of several proteins that assist in the late maturation steps of the functional core of the 30S ribosomal subunit. Associates with free 30S ribosomal subunits (but not with 30S subunits that are part of 70S ribosomes or polysomes). Required for efficient processing of 16S rRNA. May interact with the 5'-terminal helix region of 16S rRNA. In Buchnera aphidicola subsp. Schizaphis graminum (strain Sg), this protein is Ribosome-binding factor A.